The sequence spans 235 residues: Leucyl/phenylalanyl-tRNA--protein transferase (235 aa).

It belongs to the L/F-transferase family.

The protein localises to the cytoplasm. It catalyses the reaction N-terminal L-lysyl-[protein] + L-leucyl-tRNA(Leu) = N-terminal L-leucyl-L-lysyl-[protein] + tRNA(Leu) + H(+). It carries out the reaction N-terminal L-arginyl-[protein] + L-leucyl-tRNA(Leu) = N-terminal L-leucyl-L-arginyl-[protein] + tRNA(Leu) + H(+). The catalysed reaction is L-phenylalanyl-tRNA(Phe) + an N-terminal L-alpha-aminoacyl-[protein] = an N-terminal L-phenylalanyl-L-alpha-aminoacyl-[protein] + tRNA(Phe). Its function is as follows. Functions in the N-end rule pathway of protein degradation where it conjugates Leu, Phe and, less efficiently, Met from aminoacyl-tRNAs to the N-termini of proteins containing an N-terminal arginine or lysine. The sequence is that of Leucyl/phenylalanyl-tRNA--protein transferase from Shewanella frigidimarina (strain NCIMB 400).